A 188-amino-acid chain; its full sequence is Peptidyl-tRNA hydrolase (188 aa).

Position 14 (Tyr14) interacts with tRNA. His19 functions as the Proton acceptor in the catalytic mechanism. TRNA contacts are provided by Tyr64, Asn66, and Asn112.

Belongs to the PTH family. As to quaternary structure, monomer.

Its subcellular location is the cytoplasm. It catalyses the reaction an N-acyl-L-alpha-aminoacyl-tRNA + H2O = an N-acyl-L-amino acid + a tRNA + H(+). In terms of biological role, hydrolyzes ribosome-free peptidyl-tRNAs (with 1 or more amino acids incorporated), which drop off the ribosome during protein synthesis, or as a result of ribosome stalling. Functionally, catalyzes the release of premature peptidyl moieties from peptidyl-tRNA molecules trapped in stalled 50S ribosomal subunits, and thus maintains levels of free tRNAs and 50S ribosomes. This Clostridium perfringens (strain ATCC 13124 / DSM 756 / JCM 1290 / NCIMB 6125 / NCTC 8237 / Type A) protein is Peptidyl-tRNA hydrolase.